We begin with the raw amino-acid sequence, 432 residues long: Amino-acid acetyltransferase (432 aa).

The region spanning E286 to S425 is the N-acetyltransferase domain.

The protein belongs to the acetyltransferase family. ArgA subfamily.

It localises to the cytoplasm. The enzyme catalyses L-glutamate + acetyl-CoA = N-acetyl-L-glutamate + CoA + H(+). It participates in amino-acid biosynthesis; L-arginine biosynthesis; N(2)-acetyl-L-ornithine from L-glutamate: step 1/4. The chain is Amino-acid acetyltransferase from Pseudomonas paraeruginosa (strain DSM 24068 / PA7) (Pseudomonas aeruginosa (strain PA7)).